A 376-amino-acid chain; its full sequence is MSSVVSLAEISRAARPLNWLDSIIKGDCVAALNALPDHSVDVVFADPPYNLQLGGTLHRPDQSLVDAVDDDWDQFASFEAYDAFTRAWLLACRRVLKPTGTLWVIGSYHNIFRVGAILQDLHFWVLNDIIWRKTNPMPNFKGRRFQNAHETLIWATPNAKAKGYTFNYEAMKAANDDVQMRSDWLFPICSGSERLKGDDGKKVHPTQKPEALLARILMASTKPGDVVLDPFFGSGTTGAVAKRLGRHFVGIEREQDYIDAAAERIAAVEPLGKATLSVMTGKKAEPRVAFNTLVESGLIKPGTVLTDAKRRYSAIVRADGTLASGGEAGSIHRLGAKVQGLDACNGWTFWHFEEGSVLKPIDELRSVIRNDLAKLN.

Positions 273–370 (KATLSVMTGK…IDELRSVIRN (98 aa)) constitute an RAMA domain.

The protein belongs to the N(4)/N(6)-methyltransferase family.

The enzyme catalyses a 2'-deoxyadenosine in DNA + S-adenosyl-L-methionine = an N(6)-methyl-2'-deoxyadenosine in DNA + S-adenosyl-L-homocysteine + H(+). Its function is as follows. A beta subtype methylase that recognizes the double-stranded sequence 5'-GANTC-3' and methylates A-2 on both strands. Overexpression leads to many branched and bloated cells, two to three times the size of wild-type cells, and cells that have 1-3 times the normal amount of DNA. Contributes to the accurate cell-cycle control of DNA replication and cellular morphology. Can fully replace its ortholog in C.crescentus. The polypeptide is DNA methyltransferase CcrM (smeIM) (Rhizobium meliloti (strain 1021) (Ensifer meliloti)).